Here is a 616-residue protein sequence, read N- to C-terminus: MPQYRSRTSTAGRNMAGARALWRATGMKDGDFEKPIIAIANSFTQFVPGHVHLKDLGQLVAREIEAAGGVAKEFNTIAVDDGIAMGHGGMLYSLPSRDLIADSVEYMVNAHTADALVCISNCDKITPGMLMAALRLNIPTIFVSGGPMEAGKVKWEAKIIPLDLVDAMVKAADKNCSDEEVDAIERSACPTCGSCSGMFTANSMNCLTEALGLSLPGNGTTLATHADREKLFREAGRRIVDLAKRYYEKDDATVLPRAIASFAAFENAISLDVAMGGSTNTVLHLLAAAKEAGVDFTMKDIDRISRHVPCLCKVAPAVPDVHIEDVHRAGGIMSILGELDRAGLLNRDVPTVHSKTLGEALGRWDIMQAHDKAVFDFFLAAPGGVPTQVAFSQNRRWNELDMDRAKGVIRNKANAFSQDGGLAVLYGNIAEKGCIVKTAGVDESIWQFTGKARVYESQEDAVEGILGEQVQAGDVVVIRYEGPKGGPGMQEMLYPTSYLKSRGLGKECALLTDGRFSGGTSGLSIGHASPEAAMGGAIALVEDGDTIEIDIPNRRIALAVSDEELARRRAAMEAKGAAAWKPANRERVVSAALQAYAALTTSADTGAVRDITQVQR.

Residue Asp81 participates in Mg(2+) binding. [2Fe-2S] cluster is bound at residue Cys122. Positions 123 and 124 each coordinate Mg(2+). The residue at position 124 (Lys124) is an N6-carboxylysine. Cys195 lines the [2Fe-2S] cluster pocket. Glu491 is a binding site for Mg(2+). Ser517 acts as the Proton acceptor in catalysis.

The protein belongs to the IlvD/Edd family. In terms of assembly, homodimer. Requires [2Fe-2S] cluster as cofactor. It depends on Mg(2+) as a cofactor.

It carries out the reaction (2R)-2,3-dihydroxy-3-methylbutanoate = 3-methyl-2-oxobutanoate + H2O. The catalysed reaction is (2R,3R)-2,3-dihydroxy-3-methylpentanoate = (S)-3-methyl-2-oxopentanoate + H2O. It participates in amino-acid biosynthesis; L-isoleucine biosynthesis; L-isoleucine from 2-oxobutanoate: step 3/4. Its pathway is amino-acid biosynthesis; L-valine biosynthesis; L-valine from pyruvate: step 3/4. Functionally, functions in the biosynthesis of branched-chain amino acids. Catalyzes the dehydration of (2R,3R)-2,3-dihydroxy-3-methylpentanoate (2,3-dihydroxy-3-methylvalerate) into 2-oxo-3-methylpentanoate (2-oxo-3-methylvalerate) and of (2R)-2,3-dihydroxy-3-methylbutanoate (2,3-dihydroxyisovalerate) into 2-oxo-3-methylbutanoate (2-oxoisovalerate), the penultimate precursor to L-isoleucine and L-valine, respectively. This chain is Dihydroxy-acid dehydratase, found in Azoarcus sp. (strain BH72).